Here is a 329-residue protein sequence, read N- to C-terminus: Mitochondrial substrate carrier family protein Q (329 aa).

Solcar repeat units follow at residues 18–115 (VEAL…LKSI), 125–206 (LGTI…LRAL), and 216–310 (LGGL…VVIH). Helical transmembrane passes span 21-41 (LGHA…TYPF), 95-115 (LIGI…LKSI), 131-151 (LAIA…IWVV), 175-195 (GFGG…NPSV), 221-241 (VFIL…PYLL), and 298-318 (AFMF…LFYL).

This sequence belongs to the mitochondrial carrier (TC 2.A.29) family.

It is found in the peroxisome membrane. Its function is as follows. May have transport activity. The sequence is that of Mitochondrial substrate carrier family protein Q (mcfQ) from Dictyostelium discoideum (Social amoeba).